The following is a 182-amino-acid chain: Mesencephalic astrocyte-derived neurotrophic factor (182 aa).

An N-terminal signal peptide occupies residues 1 to 24 (MRRMWATQGLAVALALSVLPGSRA). Cystine bridges form between cysteine 30/cysteine 117, cysteine 33/cysteine 106, cysteine 64/cysteine 75, and cysteine 151/cysteine 154. Tyrosine 76 is subject to Phosphotyrosine. An interacts with ERN1, EIF2AK3 and ATF6 region spans residues 96-158 (LAHHIPVEKI…ETCKGCAEKS (63 aa)). Positions 129–172 (TVDLKKLRVKELKKILDDWGETCKGCAEKSDYIRKINELMPKYA) are interacts with HSPA5.

Belongs to the ARMET family. In terms of assembly, interacts directly (via SAP domain) with HSPA5/BiP; the interaction inhibits ATP binding to HSPA5/BiP and subsequent nucleotide exchange. Component of a complex containing at least CRELD2, MANF, MATN3 and PDIA4. Interacts (via C-terminus) with ERN1 (via luminal domain); the interaction is decreased in the presence of increasing concentrations of Ca(2+). Post-translationally, may contain sialic acid residues.

The protein resides in the secreted. It is found in the endoplasmic reticulum lumen. The protein localises to the sarcoplasmic reticulum lumen. Functionally, selectively promotes the survival of dopaminergic neurons of the ventral mid-brain. Modulates GABAergic transmission to the dopaminergic neurons of the substantia nigra. Enhances spontaneous, as well as evoked, GABAergic inhibitory postsynaptic currents in dopaminergic neurons. Inhibits cell proliferation and endoplasmic reticulum (ER) stress-induced cell death. Retained in the ER/sarcoplasmic reticulum (SR) through association with the endoplasmic reticulum chaperone protein HSPA5 under normal conditions. Stabilizes HSPA5/BiP in its substrate-bound ADP state, which facilitates HSPA5/BiP incorporation into chaperone-client complexes during endoplasmic reticulum stress, its interaction with HSPA5/BiP inhibits ATP binding to HSPA5/BiP and subsequent nucleotide exchange. As a result acts as a repressor of the unfolded protein response (UPR) pathway. Up-regulated and secreted by the ER/SR in response to ER stress and hypoxia. Following secretion by the ER/SR, directly binds to 3-O-sulfogalactosylceramide, a lipid sulfatide in the outer cell membrane of target cells. Sulfatide binding promotes its cellular uptake by endocytosis, and is required for its role in alleviating ER stress and cell toxicity under hypoxic and ER stress conditions. Essential for embryonic lung development. Required for the correct postnatal temporal and structural development of splenic white pulp. Required for the repair-associated myeloid response in skeletal muscle, acts as a regulator of phenotypic transition towards prorepair macrophages in response to muscle injury and as a result limits excessive proinflammatory signaling. Represses RELA expression and therefore NF-kB signaling in the myocardium, as a result limits macrophage infiltration of injured tissue and M1 macrophage differentiation in response to myocardial injury. Required for endochondral ossification in long bones and the skull during postnatal development. The protein is Mesencephalic astrocyte-derived neurotrophic factor of Homo sapiens (Human).